The following is a 303-amino-acid chain: Oxygen-dependent coproporphyrinogen-III oxidase (303 aa).

S93 provides a ligand contact to substrate. A divalent metal cation-binding residues include H97 and H107. H107 (proton donor) is an active-site residue. 109–111 (NVR) lines the substrate pocket. H149 and H179 together coordinate a divalent metal cation. Residues 244-279 (YVEFNLVFDRGTLFGLQSGGRTESILLSMPPLAQWR) are important for dimerization. 262 to 264 (GGR) provides a ligand contact to substrate.

It belongs to the aerobic coproporphyrinogen-III oxidase family. As to quaternary structure, homodimer. The cofactor is a divalent metal cation.

Its subcellular location is the cytoplasm. The catalysed reaction is coproporphyrinogen III + O2 + 2 H(+) = protoporphyrinogen IX + 2 CO2 + 2 H2O. The protein operates within porphyrin-containing compound metabolism; protoporphyrin-IX biosynthesis; protoporphyrinogen-IX from coproporphyrinogen-III (O2 route): step 1/1. Functionally, involved in the heme biosynthesis. Catalyzes the aerobic oxidative decarboxylation of propionate groups of rings A and B of coproporphyrinogen-III to yield the vinyl groups in protoporphyrinogen-IX. In Bordetella parapertussis (strain 12822 / ATCC BAA-587 / NCTC 13253), this protein is Oxygen-dependent coproporphyrinogen-III oxidase.